A 707-amino-acid polypeptide reads, in one-letter code: Protein SGM1 (707 aa).

A compositionally biased stretch (basic and acidic residues) spans 1 to 11 (MSKKLSLEERL). The interval 1-52 (MSKKLSLEERLSLATKKGRKKNKRSTSNLSSPSPVVLSNNEQESARTSIDDA) is disordered. N-acetylserine is present on Ser-2. Low complexity predominate over residues 27-40 (SNLSSPSPVVLSNN). Residues 122 to 473 (VEELVKEISP…KPHQENSNEK (352 aa)) adopt a coiled-coil conformation. 7 positions are modified to phosphoserine: Ser-151, Ser-538, Ser-549, Ser-568, Ser-571, Ser-576, and Ser-589. Positions 594–706 (SAHLVNKLST…QQMVEMQGKM (113 aa)) form a coiled coil.

The protein belongs to the SGM1 family. In terms of assembly, interacts with YPT6.

It is found in the golgi apparatus. Required for normal growth rate on galactose and mannose. This Saccharomyces cerevisiae (strain ATCC 204508 / S288c) (Baker's yeast) protein is Protein SGM1 (SGM1).